The sequence spans 286 residues: Divergent deoxyribose-phosphate aldolase-like protein (286 aa).

In terms of assembly, homodimer. Interacts with ADF; the interaction enhances ADF activity in disassembly of filamentous actin and inhibition of actin polymerization.

Its subcellular location is the cytoplasm. Involved in regulation of actin dynamics. In Toxoplasma gondii, this protein is Divergent deoxyribose-phosphate aldolase-like protein.